We begin with the raw amino-acid sequence, 200 residues long: Small ribosomal subunit protein uS4 (200 aa).

Positions 22-42 (TGKELEKRPYAPGPHGPNQRK) are disordered. Positions 92-152 (ARLDNLVYRM…EKSNSLVVVK (61 aa)) constitute an S4 RNA-binding domain.

Belongs to the universal ribosomal protein uS4 family. As to quaternary structure, part of the 30S ribosomal subunit. Contacts protein S5. The interaction surface between S4 and S5 is involved in control of translational fidelity.

Its function is as follows. One of the primary rRNA binding proteins, it binds directly to 16S rRNA where it nucleates assembly of the body of the 30S subunit. In terms of biological role, with S5 and S12 plays an important role in translational accuracy. In Bacillus mycoides (strain KBAB4) (Bacillus weihenstephanensis), this protein is Small ribosomal subunit protein uS4.